A 313-amino-acid chain; its full sequence is Glyoxylate/hydroxypyruvate reductase A HPR2 (313 aa).

Residues 152 to 155 (LGRI), 174 to 176 (SRT), 230 to 232 (IGR), and aspartate 256 contribute to the NADP(+) site. Residue arginine 232 is part of the active site. Glutamate 261 is an active-site residue. Histidine 279 (proton donor) is an active-site residue. Residue 279-281 (HVG) coordinates NADP(+).

Belongs to the D-isomer specific 2-hydroxyacid dehydrogenase family. GyaR subfamily. Homodimer.

The protein resides in the cytoplasm. It catalyses the reaction glycolate + NADP(+) = glyoxylate + NADPH + H(+). It carries out the reaction (R)-glycerate + NAD(+) = 3-hydroxypyruvate + NADH + H(+). The enzyme catalyses (R)-glycerate + NADP(+) = 3-hydroxypyruvate + NADPH + H(+). With respect to regulation, strongly inhibited by oxalate. Its function is as follows. Catalyzes the NADPH-dependent reduction of glyoxylate and hydroxypyruvate (HP) into glycolate and glycerate in the cytoplasm, thus providing a cytosolic bypass to the photorespiratory core cycle. Mostly active in the presence of NADPH and hydroxypyruvate. This chain is Glyoxylate/hydroxypyruvate reductase A HPR2 (HPR2), found in Arabidopsis thaliana (Mouse-ear cress).